We begin with the raw amino-acid sequence, 286 residues long: MASELAMTAELPTSPLAIEYVNDFDLMKFEVKKEPAEAERLCHRLPAGSLSSTPLSTPCSSVPSSPSFCAPSPGGQPSAGPTAAPLGSKPQLEELYWMSGYQHHLNPEALNLTPEDAVEALIGAPHHHHHHHQSYESFRPQPFGGEELPPAAHHHNAHHHHHHHHLRLEERFSDDQLVSMSVRELNRQLRGFSKEEVIRLKQNRRTLKNRGYAQSCRYKRVQQRHILENEKCQLQSQVEQLKQEVSRLAKERDLYKEKYEKLAARGFPREPSPPAAPKTTAADFFM.

Phosphoserine occurs at positions 14 and 49. The segment covering 51-85 has biased composition (low complexity); the sequence is SSTPLSTPCSSVPSSPSFCAPSPGGQPSAGPTAAP. Positions 51–87 are disordered; it reads SSTPLSTPCSSVPSSPSFCAPSPGGQPSAGPTAAPLG. Phosphothreonine occurs at positions 53 and 57. 2 positions are modified to phosphoserine: Ser61 and Ser65. Phosphothreonine is present on Thr113. Positions 126–167 are disordered; it reads HHHHHHHQSYESFRPQPFGGEELPPAAHHHNAHHHHHHHHLR. The segment covering 152-166 has biased composition (basic residues); the sequence is AHHHNAHHHHHHHHL. The segment at 199–224 is basic motif; the sequence is RLKQNRRTLKNRGYAQSCRYKRVQQR. The 64-residue stretch at 199–262 folds into the bZIP domain; the sequence is RLKQNRRTLK…DLYKEKYEKL (64 aa). Residues 227–248 are leucine-zipper; sequence LENEKCQLQSQVEQLKQEVSRL. The tract at residues 265-286 is disordered; sequence RGFPREPSPPAAPKTTAADFFM. The residue at position 272 (Ser272) is a Phosphoserine. The span at 277 to 286 shows a compositional bias: low complexity; the sequence is PKTTAADFFM.

The protein belongs to the bZIP family. Maf subfamily. As to quaternary structure, forms homodimers or heterodimers. May interact (via leucine-zipper domain) with MAFB. May interact with FOS and JUN. Interacts with PCAF; this interaction impairs MAFA ubiquitination.

The protein localises to the nucleus. Functionally, transcription factor involved in transcription regulation during lens development, including that of crystallin and filensin/BFSP1 genes. Binds to CRE-type MARE 5'-TGCTGACGTCAGCA-3' and TRE-type MARE 5'-TGCTGACTCAGCA-3' DNA sequences. The chain is Transcription factor MafA (MAFA) from Gallus gallus (Chicken).